The sequence spans 113 residues: Large ribosomal subunit protein uL22 (113 aa).

Belongs to the universal ribosomal protein uL22 family. In terms of assembly, part of the 50S ribosomal subunit.

In terms of biological role, this protein binds specifically to 23S rRNA; its binding is stimulated by other ribosomal proteins, e.g. L4, L17, and L20. It is important during the early stages of 50S assembly. It makes multiple contacts with different domains of the 23S rRNA in the assembled 50S subunit and ribosome. The globular domain of the protein is located near the polypeptide exit tunnel on the outside of the subunit, while an extended beta-hairpin is found that lines the wall of the exit tunnel in the center of the 70S ribosome. In Chloroflexus aggregans (strain MD-66 / DSM 9485), this protein is Large ribosomal subunit protein uL22.